Consider the following 191-residue polypeptide: Elongation factor P (191 aa).

The protein belongs to the elongation factor P family.

The protein resides in the cytoplasm. The protein operates within protein biosynthesis; polypeptide chain elongation. Its function is as follows. Involved in peptide bond synthesis. Stimulates efficient translation and peptide-bond synthesis on native or reconstituted 70S ribosomes in vitro. Probably functions indirectly by altering the affinity of the ribosome for aminoacyl-tRNA, thus increasing their reactivity as acceptors for peptidyl transferase. The protein is Elongation factor P of Ralstonia pickettii (strain 12J).